Consider the following 571-residue polypeptide: Hemagglutinin-neuraminidase (571 aa).

At Met1–Arg26 the chain is on the intravirion side. Residues Ile27–Ser47 traverse the membrane as a helical segment. Topologically, residues Met48 to Val571 are virion surface. N-linked (GlcNAc...) asparagine; by host glycosylation is present at Asn119. Residues Gly124 to Tyr152 form an important for interaction with fusion/F protein region. Intrachain disulfides connect Cys172-Cys196, Cys186-Cys247, and Cys238-Cys251. The segment at Asn234–Ser239 is involved in neuraminidase activity. Asn341 and Asn433 each carry an N-linked (GlcNAc...) asparagine; by host glycan. 2 cysteine pairs are disulfide-bonded: Cys344/Cys461 and Cys455/Cys465. Asn481, Asn508, and Asn538 each carry an N-linked (GlcNAc...) asparagine; by host glycan. Residues Cys531 and Cys542 are joined by a disulfide bond.

It belongs to the paramyxoviruses hemagglutinin-neuraminidase family. Homotetramer; composed of disulfide-linked homodimers. Interacts with F protein trimer. Interacts with host CG-1B; this interaction inhibits viral adsorption and replication rather than internalization.

The protein localises to the virion membrane. It localises to the host cell membrane. The enzyme catalyses Hydrolysis of alpha-(2-&gt;3)-, alpha-(2-&gt;6)-, alpha-(2-&gt;8)- glycosidic linkages of terminal sialic acid residues in oligosaccharides, glycoproteins, glycolipids, colominic acid and synthetic substrates.. In terms of biological role, mediates the viral entry into the host cell together with fusion/F protein. Attaches the virus to sialic acid-containing cell receptors and thereby initiates infection. Binding of HN protein to the receptor induces a conformational change that allows the F protein to trigger virion/cell membranes fusion. Functionally, neuraminidase activity ensures the efficient spread of the virus by dissociating the mature virions from the neuraminic acid containing glycoproteins. In Gallus gallus (Chicken), this protein is Hemagglutinin-neuraminidase (HN).